We begin with the raw amino-acid sequence, 436 residues long: 3-ketoacyl-CoA thiolase (436 aa).

Cysteine 99 (acyl-thioester intermediate) is an active-site residue. Active-site proton acceptor residues include histidine 392 and cysteine 422.

Belongs to the thiolase-like superfamily. Thiolase family. As to quaternary structure, heterotetramer of two alpha chains (FadJ) and two beta chains (FadI).

It localises to the cytoplasm. It carries out the reaction an acyl-CoA + acetyl-CoA = a 3-oxoacyl-CoA + CoA. It participates in lipid metabolism; fatty acid beta-oxidation. Functionally, catalyzes the final step of fatty acid oxidation in which acetyl-CoA is released and the CoA ester of a fatty acid two carbons shorter is formed. This is 3-ketoacyl-CoA thiolase from Escherichia coli O1:K1 / APEC.